The primary structure comprises 415 residues: Multidrug resistance protein MdtA (415 aa).

A signal peptide spans methionine 1–alanine 21. Disordered stretches follow at residues serine 32–leucine 59 and glutamate 392–serine 415. A compositionally biased stretch (basic and acidic residues) spans serine 399–serine 415.

This sequence belongs to the membrane fusion protein (MFP) (TC 8.A.1) family. Part of a tripartite efflux system composed of MdtA, MdtB and MdtC.

It is found in the cell inner membrane. Its function is as follows. The MdtABC tripartite complex confers resistance against novobiocin and deoxycholate. The polypeptide is Multidrug resistance protein MdtA (Escherichia coli (strain SMS-3-5 / SECEC)).